Consider the following 101-residue polypeptide: Phosphoribosyl-AMP cyclohydrolase (101 aa).

Residue Asp-71 participates in Mg(2+) binding. Cys-72 is a binding site for Zn(2+). Mg(2+) contacts are provided by Asp-73 and Asp-75. Zn(2+) contacts are provided by Cys-88 and Cys-95.

It belongs to the PRA-CH family. As to quaternary structure, homodimer. Mg(2+) is required as a cofactor. The cofactor is Zn(2+).

It localises to the cytoplasm. The enzyme catalyses 1-(5-phospho-beta-D-ribosyl)-5'-AMP + H2O = 1-(5-phospho-beta-D-ribosyl)-5-[(5-phospho-beta-D-ribosylamino)methylideneamino]imidazole-4-carboxamide. The protein operates within amino-acid biosynthesis; L-histidine biosynthesis; L-histidine from 5-phospho-alpha-D-ribose 1-diphosphate: step 3/9. Catalyzes the hydrolysis of the adenine ring of phosphoribosyl-AMP. This chain is Phosphoribosyl-AMP cyclohydrolase, found in Bacillus cereus (strain ATCC 10987 / NRS 248).